The following is a 202-amino-acid chain: Imidazoleglycerol-phosphate dehydratase (202 aa).

It belongs to the imidazoleglycerol-phosphate dehydratase family.

The protein resides in the cytoplasm. It carries out the reaction D-erythro-1-(imidazol-4-yl)glycerol 3-phosphate = 3-(imidazol-4-yl)-2-oxopropyl phosphate + H2O. Its pathway is amino-acid biosynthesis; L-histidine biosynthesis; L-histidine from 5-phospho-alpha-D-ribose 1-diphosphate: step 6/9. This chain is Imidazoleglycerol-phosphate dehydratase, found in Sinorhizobium fredii (strain NBRC 101917 / NGR234).